The chain runs to 2085 residues: Protein MLP1 homolog (2085 aa).

Coiled coils occupy residues 44–367, 399–513, 568–630, 675–1205, 1232–1667, and 1744–1799; these read KIRE…SHDG, KATQ…HVLI, YELQ…RMKS, ANEA…KRTQ, LRRE…LQQE, and EIEA…AAKE. The segment at 365-398 is disordered; it reads HDGVPGSVPQTPRANGSLLARPSSPFGTPASLRG. A disordered region spans residues 934–953; sequence AERLRPLPTPRAPAAAEQPS. The Nuclear localization signal motif lies at 1159-1166; that stretch reads ERRQRLEQ. Positions 1482–1503 are enriched in polar residues; it reads LATATEKNTSLQQQLAASSTEQ. Disordered stretches follow at residues 1482 to 1514 and 1567 to 1591; these read LATATEKNTSLQQQLAASSTEQPAAAPVSAAPS and SGGDVATAETSVSAQPSAGLSDEER. Residues 1504–1514 are compositionally biased toward low complexity; it reads PAAAPVSAAPS. Residues 1574-1584 are compositionally biased toward polar residues; that stretch reads AETSVSAQPSA. The tract at residues 1816 to 2085 is disordered; sequence KPPAPAQAPA…GGGGGGGGNQ (270 aa). Residues 1817-1827 show a composition bias toward pro residues; sequence PPAPAQAPAPA. 3 stretches are compositionally biased toward low complexity: residues 1843 to 1858, 1910 to 1974, and 1982 to 1994; these read VAPATAAPAAPAQAPS, QAGQ…PVPA, and ARTARGLYQAGPR. The segment covering 1995–2016 has biased composition (gly residues); the sequence is GARGGRGGGFVGAGRGAGGAAG. Over residues 2028 to 2040 the composition is skewed to low complexity; sequence GGATATAAAAAAA. Composition is skewed to gly residues over residues 2041 to 2051 and 2076 to 2085; these read GGAGGSAGAGN and GGGGGGGGNQ.

The nuclear pore complex (NPC) constitutes the exclusive means of nucleocytoplasmic transport. NPCs allow the passive diffusion of ions and small molecules and the active, nuclear transport receptor-mediated bidirectional transport of macromolecules such as proteins, RNAs, ribonucleoparticles (RNPs), and ribosomal subunits across the nuclear envelope. The 55-60 MDa NPC is composed of at least 28 different subunits: AMO1, ELYS, GLE1, GLE2, MLP1, NDC1, NIC96, NSP1, NUP133, NUP145, NUP152, NUP159, NUP170, NUP188, NUP192, NUP37, NUP49, NUP53, NUP56, NUP57, NUP82, NUP84, NUP85, POM152, POM33, POM34, SEC13 and SEH1. Due to its 8-fold rotational symmetry, all subunits are present with 8 copies or multiples thereof.

The protein resides in the nucleus. Involved in the structural and functional organization of perinuclear chromatin. Associates with the nuclear pore complex and form filamentous structures along the nuclear periphery. The polypeptide is Protein MLP1 homolog (MLP1) (Chaetomium thermophilum (strain DSM 1495 / CBS 144.50 / IMI 039719) (Thermochaetoides thermophila)).